A 190-amino-acid chain; its full sequence is Probable nicotinate-nucleotide adenylyltransferase (190 aa).

Belongs to the NadD family.

The enzyme catalyses nicotinate beta-D-ribonucleotide + ATP + H(+) = deamido-NAD(+) + diphosphate. It functions in the pathway cofactor biosynthesis; NAD(+) biosynthesis; deamido-NAD(+) from nicotinate D-ribonucleotide: step 1/1. In terms of biological role, catalyzes the reversible adenylation of nicotinate mononucleotide (NaMN) to nicotinic acid adenine dinucleotide (NaAD). The chain is Probable nicotinate-nucleotide adenylyltransferase from Borrelia turicatae (strain 91E135).